Here is a 237-residue protein sequence, read N- to C-terminus: Uridylate kinase (237 aa).

Lys-11 to Gly-14 lines the ATP pocket. A UMP-binding site is contributed by Gly-53. Residues Gly-54 and Arg-58 each contribute to the ATP site. Residues Asp-73 and Thr-134 to Thr-141 contribute to the UMP site. 3 residues coordinate ATP: Thr-161, Tyr-167, and Asp-170.

This sequence belongs to the UMP kinase family. As to quaternary structure, homohexamer.

It localises to the cytoplasm. It carries out the reaction UMP + ATP = UDP + ADP. Its pathway is pyrimidine metabolism; CTP biosynthesis via de novo pathway; UDP from UMP (UMPK route): step 1/1. Inhibited by UTP. Functionally, catalyzes the reversible phosphorylation of UMP to UDP. This Burkholderia mallei (strain NCTC 10247) protein is Uridylate kinase.